The following is a 301-amino-acid chain: MIMPTPFVSQLSPSLFTTLREQLEKKGFVISIPPHTVFQGRSSTVSCTVYQSGKIVVQGKGTQEFVEFFLEPEILHSFSIQNVQQDLRPRIGVDESGKGDFFGPLCTAGVYAPSIKSIESLYEITICDSKLISDAKIPSLARSIRSLCTCKVITLFPEKYNALYANFQNLNALLAWTHATIIDDLAPKPTGDVFAISDQFASSERVLLQAVRKKRADIELIQRHRAEQDVVVAAASILARDAFLSSMQTLESQYQVRLLKGASGKVKQQAKEILRDKGQPVLEKVCKTHFKTFYEVLGSTS.

Residues 88-301 form the RNase H type-2 domain; the sequence is RPRIGVDESG…TFYEVLGSTS (214 aa). Aspartate 94, glutamate 95, and aspartate 198 together coordinate a divalent metal cation.

This sequence belongs to the RNase HII family. RnhC subfamily. Mn(2+) is required as a cofactor. It depends on Mg(2+) as a cofactor.

Its subcellular location is the cytoplasm. The enzyme catalyses Endonucleolytic cleavage to 5'-phosphomonoester.. Endonuclease that specifically degrades the RNA of RNA-DNA hybrids. The sequence is that of Ribonuclease HIII (rnhC) from Chlamydia muridarum (strain MoPn / Nigg).